A 150-amino-acid polypeptide reads, in one-letter code: Deoxyuridine 5'-triphosphate nucleotidohydrolase (150 aa).

Substrate is bound by residues 69-71 (RSG), N82, 86-88 (LID), and K96.

The protein belongs to the dUTPase family. Mg(2+) is required as a cofactor.

The enzyme catalyses dUTP + H2O = dUMP + diphosphate + H(+). It functions in the pathway pyrimidine metabolism; dUMP biosynthesis; dUMP from dCTP (dUTP route): step 2/2. Its function is as follows. This enzyme is involved in nucleotide metabolism: it produces dUMP, the immediate precursor of thymidine nucleotides and it decreases the intracellular concentration of dUTP so that uracil cannot be incorporated into DNA. In Neisseria gonorrhoeae (strain ATCC 700825 / FA 1090), this protein is Deoxyuridine 5'-triphosphate nucleotidohydrolase.